A 620-amino-acid polypeptide reads, in one-letter code: E3 ubiquitin-protein ligase DTX1 (620 aa).

2 WWE domains span residues 14–94 and 95–171; these read GLGF…PVRR and NFYD…RLRR. 3 disordered regions span residues 221–248, 262–313, and 361–391; these read SQRR…LAVR, PAAG…SIPP, and PPVS…KSKN. 2 stretches are compositionally biased toward pro residues: residues 227-241 and 268-280; these read PPAP…PGGP and EPAP…PRSP. Residues 230–233 carry the SH3-binding motif; it reads PPLP. The span at 291–307 shows a compositional bias: polar residues; that stretch reads QNNLNRPGPQRTTSVSA. Basic residues predominate over residues 379–389; it reads RKTKKKHLKKS. The RING-type zinc-finger motif lies at 411 to 472; the sequence is CTICMERLVT…DGSLQCPTCK (62 aa).

Belongs to the Deltex family. Homodimer. May form a heterodimer with other members of the Deltex family. Interacts with NOTCH1 via its N-terminal region and EIF3F, the interaction is required for NOTCH1 deubiquitination. Interacts with EP300. Forms a heterodimer with BBAP; the heterodimerization leading to an increase of in vitro ubiquitin ligase activity. Interacts with ITCH. Ubiquitinated; undergoes 'Lys-29'-linked polyubiquitination catalyzed by ITCH. Widely expressed. Strongly expressed in blood vessel. Also expressed in embryonic nervous system, pancreas, lung, adrenal gland, digestive tube and muscles. Expressed in MZB cells and developing B- and T-cells.

Its subcellular location is the cytoplasm. It is found in the nucleus. It carries out the reaction S-ubiquitinyl-[E2 ubiquitin-conjugating enzyme]-L-cysteine + [acceptor protein]-L-lysine = [E2 ubiquitin-conjugating enzyme]-L-cysteine + N(6)-ubiquitinyl-[acceptor protein]-L-lysine.. It participates in protein modification; protein ubiquitination. Functionally, functions as a ubiquitin ligase protein in vivo, mediating ubiquitination and promoting degradation of MEKK1, suggesting that it may regulate the Notch pathway via some ubiquitin ligase activity. Regulator of Notch signaling, a signaling pathway involved in cell-cell communications that regulates a broad spectrum of cell-fate determinations. Mainly acts as a positive regulator of Notch, but it also acts as a negative regulator, depending on the developmental and cell context. Mediates the antineural activity of Notch, possibly by inhibiting the transcriptional activation mediated by MATCH1. Involved in neurogenesis, lymphogenesis and myogenesis, and may also be involved in MZB (Marginal zone B) cell differentiation. Promotes B-cell development at the expense of T-cell development, suggesting that it can antagonize NOTCH1. This chain is E3 ubiquitin-protein ligase DTX1 (DTX1), found in Homo sapiens (Human).